The primary structure comprises 397 residues: 4-hydroxybenzoate polyprenyltransferase, mitochondrial (397 aa).

The N-terminal 14 residues, 1–14 (MFAVRHLLKSRKHF), are a transit peptide targeting the mitochondrion. The next 9 helical transmembrane spans lie at 96 to 116 (IGTY…ADAG), 121 to 141 (LTML…GCTI), 169 to 189 (FDAI…LVQL), 190 to 210 (NWQS…YPLM), 213 to 233 (VTYW…LLGW), 242 to 262 (LAAC…YDTI), 289 to 309 (VWLS…GWAC), 313 to 333 (LPYY…IYSL), and 345 to 365 (FLSN…GTLL).

The protein belongs to the UbiA prenyltransferase family. It depends on Mg(2+) as a cofactor.

The protein resides in the mitochondrion inner membrane. It catalyses the reaction an all-trans-polyprenyl diphosphate + 4-hydroxybenzoate = a 4-hydroxy-3-(all-trans-polyprenyl)benzoate + diphosphate. It functions in the pathway cofactor biosynthesis; ubiquinone biosynthesis. Its function is as follows. Catalyzes the prenylation of para-hydroxybenzoate (PHB) with an all-trans polyprenyl group. Mediates the second step in the final reaction sequence of coenzyme Q (CoQ) biosynthesis, which is the condensation of the polyisoprenoid side chain with PHB, generating the first membrane-bound Q intermediate. This Drosophila pseudoobscura pseudoobscura (Fruit fly) protein is 4-hydroxybenzoate polyprenyltransferase, mitochondrial.